Consider the following 329-residue polypeptide: MIVVTGAAGFIGSNLVRGLNRRGIQDIIAVDDLTDGDKFRNLVDCSIADYLDKDEFRERVRGGNLPALRAVLHQGACSDTTERNGRYMLDNNYRVTLELFEYCQAERVPFLYASSAAVYGGSSVYVEDPANEHPLNVYGYSKLLFDQVLRTRMDSLTAQVVGLRYFNVYGPHEQHKGRMASVAFHNMNQFLAEGHVRLFAGWDGYEDGGQSRDFISVEDVVAVNLHFLDNPDQSGVFNCGTGRAQPFNDVAAAVVNTLRAERGEAALPLAELVKKGLLRYIPFPDDLKGRYQSYTQADVSRLRATGFSAPMRDVQTGVSEYVRYWRALK.

NADP(+) contacts are provided by residues 10–11 (FI), 31–32 (DD), K38, K53, 74–78 (QGACS), and N91. Y138 (proton acceptor) is an active-site residue. Residue K142 participates in NADP(+) binding. N167 contributes to the substrate binding site. NADP(+) contacts are provided by V168 and K176. Residue K176 is the Proton acceptor of the active site. Residues R178, H185, 199-202 (FAGW), R212, and Y291 each bind substrate.

This sequence belongs to the NAD(P)-dependent epimerase/dehydratase family. HldD subfamily. Homopentamer. The cofactor is NADP(+).

The enzyme catalyses ADP-D-glycero-beta-D-manno-heptose = ADP-L-glycero-beta-D-manno-heptose. The protein operates within nucleotide-sugar biosynthesis; ADP-L-glycero-beta-D-manno-heptose biosynthesis; ADP-L-glycero-beta-D-manno-heptose from D-glycero-beta-D-manno-heptose 7-phosphate: step 4/4. It functions in the pathway bacterial outer membrane biogenesis; LPS core biosynthesis. Catalyzes the interconversion between ADP-D-glycero-beta-D-manno-heptose and ADP-L-glycero-beta-D-manno-heptose via an epimerization at carbon 6 of the heptose. This chain is ADP-L-glycero-D-manno-heptose-6-epimerase, found in Bordetella pertussis (strain Tohama I / ATCC BAA-589 / NCTC 13251).